A 274-amino-acid polypeptide reads, in one-letter code: F-actin-capping protein subunit alpha (274 aa).

This sequence belongs to the F-actin-capping protein alpha subunit family. As to quaternary structure, heterodimer of an alpha and a beta subunit.

It localises to the cytoplasm. Its function is as follows. F-actin-capping proteins bind in a Ca(2+)-independent manner to the fast growing ends of actin filaments (barbed end) thereby blocking the exchange of subunits at these ends. Unlike other capping proteins (such as gelsolin and severin), these proteins do not sever actin filaments. The polypeptide is F-actin-capping protein subunit alpha (Chaetomium thermophilum (strain DSM 1495 / CBS 144.50 / IMI 039719) (Thermochaetoides thermophila)).